A 303-amino-acid polypeptide reads, in one-letter code: Probable 5-dehydro-4-deoxyglucarate dehydratase (303 aa).

This sequence belongs to the DapA family.

It carries out the reaction 5-dehydro-4-deoxy-D-glucarate + H(+) = 2,5-dioxopentanoate + CO2 + H2O. It functions in the pathway carbohydrate acid metabolism; D-glucarate degradation; 2,5-dioxopentanoate from D-glucarate: step 2/2. The protein is Probable 5-dehydro-4-deoxyglucarate dehydratase of Azotobacter vinelandii (strain DJ / ATCC BAA-1303).